The primary structure comprises 226 residues: Putative ABC transporter ATP-binding protein BH02760 (226 aa).

Residues 4-222 (IKFDKVTQVF…IPLVAIKEYI (219 aa)) form the ABC transporter domain. 35-42 (GANGSGKS) contacts ATP.

The protein belongs to the ABC transporter superfamily.

The protein resides in the cell inner membrane. Its function is as follows. Probably part of an ABC transporter complex. Responsible for energy coupling to the transport system. The protein is Putative ABC transporter ATP-binding protein BH02760 of Bartonella henselae (strain ATCC 49882 / DSM 28221 / CCUG 30454 / Houston 1) (Rochalimaea henselae).